A 1647-amino-acid polypeptide reads, in one-letter code: Putative RNA exonuclease pqe-1 (1647 aa).

Disordered stretches follow at residues 1-199 (MFNG…QVQN), 274-393 (QTPA…TSLP), 515-619 (MMQQ…KPVI), and 641-665 (QVKQEIPEVSSTSDATKSDAAPTAR). Composition is skewed to low complexity over residues 30–64 (GPSQNAQQQQQQASAPGTSSGGPSQAVSGASSGAS) and 99–131 (TQPQQRQQQQSQPQARQMSTQQAANLRKNAAAA). Over residues 143–170 (SREQGNAHQPTAGQIPQSSNQPAQQTHN) the composition is skewed to polar residues. Low complexity-rich tracts occupy residues 274–297 (QTPARGRPANAQLAQNAQQRNPQQ) and 515–526 (MMQQQAMQMQMQ). The span at 527–540 (NPPPVHQQPPPQQP) shows a compositional bias: pro residues. Residues 541–555 (PQQQRQKQQRSQPAP) show a composition bias toward low complexity. Over residues 592 to 601 (SKIEPVDVKP) the composition is skewed to basic and acidic residues. The segment covering 650-664 (SSTSDATKSDAAPTA) has biased composition (low complexity). The stretch at 686–726 (SAKKFERMKAEAEDKEDMKKKIAALQEALFNIQEERRVEKE) forms a coiled coil. The span at 736 to 756 (AVPQNQPASSVQIAQVSTSES) shows a compositional bias: polar residues. Positions 736–1174 (AVPQNQPASS…LRNKKHTTEE (439 aa)) are disordered. A compositionally biased stretch (low complexity) spans 761-772 (TSEAAATETMTS). A compositionally biased stretch (acidic residues) spans 783 to 793 (TEGEQEEDEDE). Residues 822 to 833 (RSDEKREKRHVS) show a composition bias toward basic and acidic residues. Residues 878 to 905 (DNEDDDADSFVVGDDEPIEYEEEDEDDM) are compositionally biased toward acidic residues. Low complexity predominate over residues 977–992 (TPTASSSMSSSTLSYC). The span at 1018–1031 (KTREENRERKRLAQ) shows a compositional bias: basic and acidic residues. The span at 1038 to 1054 (SETTGVRRTLRSTQDNS) shows a compositional bias: polar residues. Basic and acidic residues-rich tracts occupy residues 1076–1088 (AKSSENRAKEKQK) and 1139–1174 (NHTEMLDKRNKESEEKRRKDRDELERLRNKKHTTEE). A coiled-coil region spans residues 1142–1187 (EMLDKRNKESEEKRRKDRDELERLRNKKHTTEEEKIKMARLQNALK). The Exonuclease domain occupies 1477 to 1637 (RVYALDCEMV…IFYGLRNPES (161 aa)).

Belongs to the REXO1/REXO3 family. Expressed in the excretory canal, vulval cells, the intestine and in head and tail neurons including ASH, RIC and AIZ neurons.

Its subcellular location is the nucleus. In terms of biological role, putative RNA exonuclease which protects neurons from the toxic effects of expanded poly-Q disease proteins. It is unknown whether this is via participation in the pathogenic mechanism underlying poly-Q-induced neurodegeneration or if it is by acting as a genetic modifier of the age of onset or progression of neurodegeneration. Regulates gene expression in neurons. This is Putative RNA exonuclease pqe-1 from Caenorhabditis elegans.